The following is a 174-amino-acid chain: uncharacterized protein (174 aa).

The segment at 153-174 (RSGNHSAGNVHPASPMIKVQGG) is disordered.

This is an uncharacterized protein from Sinorhizobium fredii (strain NBRC 101917 / NGR234).